A 112-amino-acid chain; its full sequence is Keratin-associated protein 12-4 (112 aa).

15 tandem repeats follow at residues 10–14 (CPMAC), 20–24 (CVPST), 25–29 (CYPPE), 35–39 (CCCSA), 41–45 (CVALL), 46–50 (CRPLC), 56–60 (CQPAC), 61–65 (CVPSP), 66–70 (CQVAC), 71–75 (CVPVS), 76–80 (CKPVL), 81–85 (CVASF), 86–90 (CPTSG), 91–95 (CCQPF), and 96–100 (CPTLV). Residues 10–100 (CPMACPGSPC…CCQPFCPTLV (91 aa)) are 15 X 5 AA approximate repeats.

Belongs to the KRTAP type 12 family. Interacts with hair keratins. In terms of tissue distribution, restricted to a narrow region of the hair fiber cuticle, lying approximately 20 cell layers above the apex of the dermal papilla of the hair root; not detected in any other tissues.

Its function is as follows. In the hair cortex, hair keratin intermediate filaments are embedded in an interfilamentous matrix, consisting of hair keratin-associated proteins (KRTAP), which are essential for the formation of a rigid and resistant hair shaft through their extensive disulfide bond cross-linking with abundant cysteine residues of hair keratins. The matrix proteins include the high-sulfur and high-glycine-tyrosine keratins. This is Keratin-associated protein 12-4 (KRTAP12-4) from Homo sapiens (Human).